We begin with the raw amino-acid sequence, 471 residues long: Argininosuccinate lyase (471 aa).

The protein belongs to the lyase 1 family. Argininosuccinate lyase subfamily.

It localises to the cytoplasm. The catalysed reaction is 2-(N(omega)-L-arginino)succinate = fumarate + L-arginine. The protein operates within amino-acid biosynthesis; L-arginine biosynthesis; L-arginine from L-ornithine and carbamoyl phosphate: step 3/3. This Renibacterium salmoninarum (strain ATCC 33209 / DSM 20767 / JCM 11484 / NBRC 15589 / NCIMB 2235) protein is Argininosuccinate lyase.